The following is a 69-amino-acid chain: MNANKQRQYNQLAHELRELQTNLQETTKQLDIMSKQCNENLVGQLGKVHGSWLIGSYIYYMEQMLGKTQ.

A coiled-coil region spans residues 1–39 (MNANKQRQYNQLAHELRELQTNLQETTKQLDIMSKQCNE).

It belongs to the DASH complex HSK3 family. Component of the DASH complex consisting of ASK1, DAD1, DAD2, DAD3, DAD4, DAM1, DUO1, HSK3, SPC19 and SPC34, with a stoichiometry of one copy of each subunit per complex. Multiple DASH complexes oligomerize to form a ring that encircles spindle microtubules and organizes the rod-like NDC80 complexes of the outer kinetochore. DASH complex oligomerization strengthens microtubule attachments. On cytoplasmic microtubules, DASH complexes appear to form patches instead of rings.

The protein localises to the nucleus. It localises to the cytoplasm. It is found in the cytoskeleton. Its subcellular location is the spindle. The protein resides in the chromosome. The protein localises to the centromere. It localises to the kinetochore. Functionally, component of the DASH complex that connects microtubules with kinetochores and couples microtubule depolymerisation to chromosome movement; it is involved in retrieving kinetochores to the spindle poles before their re-orientation on the spindle in early mitosis and allows microtubule depolymerization to pull chromosomes apart and resist detachment during anaphase. Kinetochores, consisting of a centromere-associated inner segment and a microtubule-contacting outer segment, play a crucial role in chromosome segregation by mediating the physical connection between centromeric DNA and microtubules. Kinetochores also serve as an input point for the spindle assembly checkpoint, which delays anaphase until all chromosomes have bioriented on the mitotic spindle. During spindle-kinetochore attachment, kinetochores first attach to the lateral surface of spindle microtubules, which supports the congression of chromosomes toward the middle of the dividing cell; they then slide along towards the spindle pole, a process independent of the DASH complex but requiring the NDC80 complex. When the end of a disassembling microtubule reaches the laterally attached kinetochore, the DASH complex together with the NDC80 complex and STU2 convert lateral attachment to end-on capture to produce a structure that can track with microtubule shortening and sustain attachment when tension is applied across sister kinetochores upon their biorientation. Microtubule depolymerization proceeds by protofilament splaying and induces the kinetochore-attached DASH complex to slide longitudinally, thereby helping to transduce depolymerization energy into pulling forces to disjoin chromatids. Incorrect microtubule attachments are corrected by releasing microubules from the kinetochore through phosphorylation by IPL1 of kinetochore components. Links the microtubule cytoskeleton to chromosomes during interphase. Also contributes to the poleward transport of kinetochores on microtubules following centromeric DNA replication in S-phase. This Saccharomyces cerevisiae (strain ATCC 204508 / S288c) (Baker's yeast) protein is DASH complex subunit HSK3 (HSK3).